Reading from the N-terminus, the 1087-residue chain is MSYAELQVTTHFSFLRGASSAQELFETAKALGIEALGVVDRNSLAGIVRALEASRATGLRLVIGCRLDLADGMSVLVYPTDRAAYSRLTRLITLGKSRGGKNNCLLHWDDVVAYTDGMIGILVPDLPDDLCGIQLRKMAELFGDRAYVSLCLRRRQNDQLRLHEISNLATRFKVRTVVTNDVLFHEPGRRQLQDIVTCIRTRTTIDEVGFERERHADRYLKPPEEMERLFPRYRQALARTMEIVRRCTFSLEELTYQYPEEAIVPGKDAQASLEHYVWQCVPDRYPEGLPPDVLKVVRHELDLIRTMKYAPYFLTVFSIVRYARSQGILCQGRGSAANSAVCYILGITSIDPSTNDLLFERFVSQERDEPPDIDVDFEHERREEVIQWIYRTYTREKAALCATVTRYRARGAIRDVGKALGLPEDVIKALSSGMWSWSEEVCDRNVRELNLNPDDRRLVLTLKLAQQLMGAPRHLGQHPGGFVLTHDRLDDLVPIEPATMKDRQIIEWDKDDVEALKFMKVDILALGMLTCMAKAFDLIREHKDRDLDLSKIEQEDSVTYAMIRKADTLGTFQIESRAQMAMLPRLKPRTFYDLVVQVAIVRPGPIQGDMVHPYLRRREGKEAVEYPTPELEAVLGKTLGVPLFQESAMRVAMVCAGFTGGEADQLRKSMATFKFTGGVSQFKDKLVSGMVRNGYAPEFAEKTFSQLEGFGSYGFPESHAASFALIAYASSYIKCHYPEAFCAALINSQPMGFYAPAQIVGDARAHGVEVRPVCINRSRWDCTLERIGNSDRHAVRLGFRQVKGLAVADAARVVAARMNNAFVSVDDMWRRSGVPSEALVQLAKADAFLPSLKLERRDALWAIKALRDEPLPLFAAAAEREMAAIAEQQEPGVALRQMTDGHNVIEDYSHTGLTLRQHPIAFLRKDLSVRNIITCAEAMNSRDGRWVYTAGLVLVRQKPGSAKGVMFITIEDETGPANLVVWPTLFEKRRRAVLGSSMMAINGRIQREGEVVHLVAQQLFDLSGDLTGLADRDEEFKLPAGRGDEFAHGSPGSSDTRDKSKPVVAPRDIFTPDLHIDTLKIKSRNFH.

The tract at residues 1040-1064 is disordered; the sequence is AGRGDEFAHGSPGSSDTRDKSKPVV.

The protein belongs to the DNA polymerase type-C family. DnaE2 subfamily.

The protein localises to the cytoplasm. It catalyses the reaction DNA(n) + a 2'-deoxyribonucleoside 5'-triphosphate = DNA(n+1) + diphosphate. Functionally, DNA polymerase involved in damage-induced mutagenesis and translesion synthesis (TLS). It is not the major replicative DNA polymerase. The chain is Error-prone DNA polymerase 3 from Agrobacterium fabrum (strain C58 / ATCC 33970) (Agrobacterium tumefaciens (strain C58)).